A 465-amino-acid polypeptide reads, in one-letter code: Cysteine--tRNA ligase (465 aa).

C28 is a binding site for Zn(2+). The 'HIGH' region motif lies at 30-40; that stretch reads PTVYNYIHVGN. Residues C208, H233, and E237 each contribute to the Zn(2+) site. The short motif at 265–269 is the 'KMSKS' region element; it reads KMSKS. K268 contacts ATP.

This sequence belongs to the class-I aminoacyl-tRNA synthetase family. As to quaternary structure, monomer. Requires Zn(2+) as cofactor.

Its subcellular location is the cytoplasm. It catalyses the reaction tRNA(Cys) + L-cysteine + ATP = L-cysteinyl-tRNA(Cys) + AMP + diphosphate. The polypeptide is Cysteine--tRNA ligase (Exiguobacterium sp. (strain ATCC BAA-1283 / AT1b)).